The primary structure comprises 37 residues: Chorion class CB protein PCH12 (37 aa).

The central domain stretch occupies residues 1–26; it reads DGIFPTVGAGDVWYGCGDGAVGIVAE. The tract at residues 27–37 is right arm; the sequence is TPFASTTTNPA.

It belongs to the chorion protein family.

In terms of biological role, this protein is one of many from the eggshell of the silk moth. The polypeptide is Chorion class CB protein PCH12 (Antheraea polyphemus (Polyphemus moth)).